The primary structure comprises 192 residues: NADH:FMN oxidoreductase (192 aa).

Residues 1–20 (MSDKPNAVSSHTTPDVPEVA) are disordered. Residues 60–63 (TATS), 77–84 (NIAETSSS), A111, and R117 contribute to the FMN site.

It belongs to the non-flavoprotein flavin reductase family.

Its subcellular location is the cytoplasm. The enzyme catalyses FMNH2 + NAD(+) = FMN + NADH + 2 H(+). Its pathway is sulfur metabolism; dibenzothiophene degradation. In terms of biological role, an NADH:FMN oxidoreductase which supplies reduced FMN for the '4S' desulfurization pathway that removes covalently bound sulfur from dibenzothiophene (DBT) without breaking carbon-carbon bonds. Provides DszA and DszC (DBTO2-monooxygenase and DBT-monooxygenase respectively) with reduced flavin (FMN). This chain is NADH:FMN oxidoreductase, found in Rhodococcus erythropolis (Arthrobacter picolinophilus).